The following is a 436-amino-acid chain: Trigger factor (436 aa).

The PPIase FKBP-type domain occupies 161-246 (DDQLNIDFVG…VNSVAEPKLP (86 aa)).

This sequence belongs to the FKBP-type PPIase family. Tig subfamily.

Its subcellular location is the cytoplasm. It catalyses the reaction [protein]-peptidylproline (omega=180) = [protein]-peptidylproline (omega=0). Its function is as follows. Involved in protein export. Acts as a chaperone by maintaining the newly synthesized protein in an open conformation. Functions as a peptidyl-prolyl cis-trans isomerase. The sequence is that of Trigger factor from Pseudomonas paraeruginosa (strain DSM 24068 / PA7) (Pseudomonas aeruginosa (strain PA7)).